The primary structure comprises 145 residues: Superoxide dismutase [Mn/Fe] (145 aa).

His10 and His64 together coordinate Fe(3+). Residues His10 and His64 each contribute to the Mn(2+) site.

This sequence belongs to the iron/manganese superoxide dismutase family. The cofactor is Mn(2+). It depends on Fe(3+) as a cofactor.

It catalyses the reaction 2 superoxide + 2 H(+) = H2O2 + O2. Destroys superoxide anion radicals which are normally produced within the cells and which are toxic to biological systems. Catalyzes the dismutation of superoxide anion radicals into O2 and H2O2 by successive reduction and oxidation of the transition metal ion at the active site. This Streptococcus iniae (Streptococcus shiloi) protein is Superoxide dismutase [Mn/Fe] (sodA).